A 370-amino-acid polypeptide reads, in one-letter code: Flagellar P-ring protein (370 aa).

Positions 1–28 are cleaved as a signal peptide; that stretch reads MTFFTRCFRRGALLFLLAVLLLPSPAQA.

This sequence belongs to the FlgI family. In terms of assembly, the basal body constitutes a major portion of the flagellar organelle and consists of four rings (L,P,S, and M) mounted on a central rod.

The protein localises to the periplasm. It is found in the bacterial flagellum basal body. Assembles around the rod to form the L-ring and probably protects the motor/basal body from shearing forces during rotation. This is Flagellar P-ring protein from Oleidesulfovibrio alaskensis (strain ATCC BAA-1058 / DSM 17464 / G20) (Desulfovibrio alaskensis).